The sequence spans 220 residues: Deoxyribose-phosphate aldolase (220 aa).

The Proton donor/acceptor role is filled by Asp92. Lys155 functions as the Schiff-base intermediate with acetaldehyde in the catalytic mechanism. Catalysis depends on Lys184, which acts as the Proton donor/acceptor.

Belongs to the DeoC/FbaB aldolase family. DeoC type 1 subfamily.

Its subcellular location is the cytoplasm. The enzyme catalyses 2-deoxy-D-ribose 5-phosphate = D-glyceraldehyde 3-phosphate + acetaldehyde. The protein operates within carbohydrate degradation; 2-deoxy-D-ribose 1-phosphate degradation; D-glyceraldehyde 3-phosphate and acetaldehyde from 2-deoxy-alpha-D-ribose 1-phosphate: step 2/2. In terms of biological role, catalyzes a reversible aldol reaction between acetaldehyde and D-glyceraldehyde 3-phosphate to generate 2-deoxy-D-ribose 5-phosphate. This chain is Deoxyribose-phosphate aldolase, found in Natranaerobius thermophilus (strain ATCC BAA-1301 / DSM 18059 / JW/NM-WN-LF).